The chain runs to 102 residues: Small ribosomal subunit protein uS10 (102 aa).

Belongs to the universal ribosomal protein uS10 family. In terms of assembly, part of the 30S ribosomal subunit.

Functionally, involved in the binding of tRNA to the ribosomes. This Thermobifida fusca (strain YX) protein is Small ribosomal subunit protein uS10.